Here is a 337-residue protein sequence, read N- to C-terminus: Nicotinate-nucleotide--dimethylbenzimidazole phosphoribosyltransferase (337 aa).

E305 serves as the catalytic Proton acceptor.

The protein belongs to the CobT family.

The catalysed reaction is 5,6-dimethylbenzimidazole + nicotinate beta-D-ribonucleotide = alpha-ribazole 5'-phosphate + nicotinate + H(+). The protein operates within nucleoside biosynthesis; alpha-ribazole biosynthesis; alpha-ribazole from 5,6-dimethylbenzimidazole: step 1/2. Catalyzes the synthesis of alpha-ribazole-5'-phosphate from nicotinate mononucleotide (NAMN) and 5,6-dimethylbenzimidazole (DMB). The sequence is that of Nicotinate-nucleotide--dimethylbenzimidazole phosphoribosyltransferase from Roseobacter denitrificans (strain ATCC 33942 / OCh 114) (Erythrobacter sp. (strain OCh 114)).